The sequence spans 255 residues: Ribonuclease HII (255 aa).

Residues 58–247 form the RNase H type-2 domain; that stretch reads RYIAGIDEAG…VKSMVLGARY (190 aa). A divalent metal cation is bound by residues Asp64, Glu65, and Asp156.

Belongs to the RNase HII family. Requires Mn(2+) as cofactor. Mg(2+) serves as cofactor.

It is found in the cytoplasm. The catalysed reaction is Endonucleolytic cleavage to 5'-phosphomonoester.. Its function is as follows. Endonuclease that specifically degrades the RNA of RNA-DNA hybrids. In Syntrophomonas wolfei subsp. wolfei (strain DSM 2245B / Goettingen), this protein is Ribonuclease HII.